Reading from the N-terminus, the 350-residue chain is RING finger protein 44 (350 aa).

The segment at 298 to 339 (CVVCFSDFEVRQLLRVLPCNHEFHAKCVDKWLKANRTCPICR) adopts an RING-type; atypical zinc-finger fold.

This Rattus norvegicus (Rat) protein is RING finger protein 44 (Rnf44).